Reading from the N-terminus, the 313-residue chain is Tyrosine--tRNA ligase (313 aa).

Tyrosine 32 serves as a coordination point for L-tyrosine. The 'HIGH' region signature appears at 37–45; sequence PSGEIHLGH. Residues tyrosine 152, glutamine 156, aspartate 159, and glutamine 174 each coordinate L-tyrosine. A 'KMSKS' region motif is present at residues 208 to 212; it reads KMSSS. ATP is bound at residue serine 211.

It belongs to the class-I aminoacyl-tRNA synthetase family. TyrS type 3 subfamily. As to quaternary structure, homodimer.

The protein localises to the cytoplasm. It catalyses the reaction tRNA(Tyr) + L-tyrosine + ATP = L-tyrosyl-tRNA(Tyr) + AMP + diphosphate + H(+). Functionally, catalyzes the attachment of tyrosine to tRNA(Tyr) in a two-step reaction: tyrosine is first activated by ATP to form Tyr-AMP and then transferred to the acceptor end of tRNA(Tyr). In Methanospirillum hungatei JF-1 (strain ATCC 27890 / DSM 864 / NBRC 100397 / JF-1), this protein is Tyrosine--tRNA ligase.